Consider the following 201-residue polypeptide: MASRSAGTLLTEFNAAYVPPGLMPGYQGHVPTVAFSFGAPYGTTTLKYFQDHRNRAMEKSHTPFSQGGHFPTIFSTNPNLLLMERASTRDRWLHKPSYTRFNLDSHRSTELTNFYQMVQQHRKYYQDKTGTVPRVPYFAMPVREPERYPLPTVLPPLCPKKKWHLLRLAPENLKTYQTFPSGKRVSPQERKKRDCYFEFRA.

This sequence belongs to the CIMIP2 family. As to quaternary structure, microtubule inner protein component of sperm flagellar doublet microtubules. Expressed in airway epithelial cells.

Its subcellular location is the cytoplasm. It localises to the cytoskeleton. It is found in the cilium axoneme. The protein resides in the flagellum axoneme. Microtubule inner protein (MIP) part of the dynein-decorated doublet microtubules (DMTs) in cilia axoneme, which is required for motile cilia beating. Binds to the intra-tubulin interfaces. In Homo sapiens (Human), this protein is Ciliary microtubule inner protein 2C.